We begin with the raw amino-acid sequence, 183 residues long: Endoribonuclease YbeY (183 aa).

Zn(2+) is bound by residues His-118, His-122, and His-128. The disordered stretch occupies residues Glu-156–His-183.

The protein belongs to the endoribonuclease YbeY family. It depends on Zn(2+) as a cofactor.

Its subcellular location is the cytoplasm. In terms of biological role, single strand-specific metallo-endoribonuclease involved in late-stage 70S ribosome quality control and in maturation of the 3' terminus of the 16S rRNA. The chain is Endoribonuclease YbeY from Saccharopolyspora erythraea (strain ATCC 11635 / DSM 40517 / JCM 4748 / NBRC 13426 / NCIMB 8594 / NRRL 2338).